A 366-amino-acid polypeptide reads, in one-letter code: Anthranilate phosphoribosyltransferase (366 aa).

5-phospho-alpha-D-ribose 1-diphosphate contacts are provided by residues Gly-79, 82-83 (GD), Thr-87, 89-92 (NIST), 107-115 (KHGNRAATS), and Ser-119. Residue Gly-79 coordinates anthranilate. Ser-91 contributes to the Mg(2+) binding site. Asn-110 provides a ligand contact to anthranilate. Arg-165 lines the anthranilate pocket. Residues Asp-223 and Glu-224 each coordinate Mg(2+). The tract at residues 342-366 (ESLSGKSMSMRSRTSILSPASGERV) is disordered. The span at 345 to 359 (SGKSMSMRSRTSILS) shows a compositional bias: polar residues.

The protein belongs to the anthranilate phosphoribosyltransferase family. In terms of assembly, homodimer. Mg(2+) serves as cofactor.

The enzyme catalyses N-(5-phospho-beta-D-ribosyl)anthranilate + diphosphate = 5-phospho-alpha-D-ribose 1-diphosphate + anthranilate. Its pathway is amino-acid biosynthesis; L-tryptophan biosynthesis; L-tryptophan from chorismate: step 2/5. Its function is as follows. Catalyzes the transfer of the phosphoribosyl group of 5-phosphorylribose-1-pyrophosphate (PRPP) to anthranilate to yield N-(5'-phosphoribosyl)-anthranilate (PRA). The sequence is that of Anthranilate phosphoribosyltransferase from Methanosarcina barkeri (strain Fusaro / DSM 804).